Here is an 89-residue protein sequence, read N- to C-terminus: Small ribosomal subunit protein uS14A (89 aa).

This sequence belongs to the universal ribosomal protein uS14 family. As to quaternary structure, part of the 30S ribosomal subunit. Contacts proteins S3 and S10.

Functionally, binds 16S rRNA, required for the assembly of 30S particles and may also be responsible for determining the conformation of the 16S rRNA at the A site. In Lactococcus lactis subsp. lactis (strain IL1403) (Streptococcus lactis), this protein is Small ribosomal subunit protein uS14A.